A 156-amino-acid polypeptide reads, in one-letter code: Small ribosomal subunit protein uS7 (156 aa).

Belongs to the universal ribosomal protein uS7 family. Part of the 30S ribosomal subunit. Contacts proteins S9 and S11.

In terms of biological role, one of the primary rRNA binding proteins, it binds directly to 16S rRNA where it nucleates assembly of the head domain of the 30S subunit. Is located at the subunit interface close to the decoding center, probably blocks exit of the E-site tRNA. This Rubrobacter xylanophilus (strain DSM 9941 / JCM 11954 / NBRC 16129 / PRD-1) protein is Small ribosomal subunit protein uS7.